A 368-amino-acid chain; its full sequence is MQTNFSQPQTFNPADITRNVIDNNQDDMVDSLDSDEEDLDLDLDLELSDEQEIAHKGVKSARFKKLQKKLRKQVSHAIRDFNMIEDGDVVMVCVSGGKDSYTLLDILLFLKRIAPINFDVVAVNLDQKQPGYPEEVLPNYLQQQGIPHYILEKDTYSVVKSVVPEGKTYCSACSRLRRGSLYGFAKQIGATKIALGHHRDDILATFFLNLFHGGSLKAMPPKLLSDDKQNVLIRPLAYVEEKDIIKYARYKEFPIIPCNLCGSQENLQRAMINDMLRQWDDAHPQRLASIFKAMQNVAPSQLADRELFDFESLTLQRDDSKRDFEGHNIQVGVANELAEIGLPTQPDIKPFESATAAKKIPTINPIID.

Positions Ser95–Ser100 match the PP-loop motif motif. Positions 170, 173, and 261 each coordinate [4Fe-4S] cluster.

Belongs to the TtcA family. In terms of assembly, homodimer. The cofactor is Mg(2+). It depends on [4Fe-4S] cluster as a cofactor.

The protein resides in the cytoplasm. It catalyses the reaction cytidine(32) in tRNA + S-sulfanyl-L-cysteinyl-[cysteine desulfurase] + AH2 + ATP = 2-thiocytidine(32) in tRNA + L-cysteinyl-[cysteine desulfurase] + A + AMP + diphosphate + H(+). Its pathway is tRNA modification. Catalyzes the ATP-dependent 2-thiolation of cytidine in position 32 of tRNA, to form 2-thiocytidine (s(2)C32). The sulfur atoms are provided by the cysteine/cysteine desulfurase (IscS) system. The sequence is that of tRNA-cytidine(32) 2-sulfurtransferase from Psychrobacter sp. (strain PRwf-1).